Consider the following 289-residue polypeptide: Phosphoribulokinase (289 aa).

12-20 (GSSGAGTTT) lines the ATP pocket.

This sequence belongs to the phosphoribulokinase family.

It catalyses the reaction D-ribulose 5-phosphate + ATP = D-ribulose 1,5-bisphosphate + ADP + H(+). It functions in the pathway carbohydrate biosynthesis; Calvin cycle. In Rhizobium meliloti (strain 1021) (Ensifer meliloti), this protein is Phosphoribulokinase (cbbP).